Consider the following 153-residue polypeptide: Protein C (153 aa).

Residues 16-42 (SSETLTLLSNQEPLSMQDPPLVRSSTR) form a disordered region. Over residues 18 to 29 (ETLTLLSNQEPL) the composition is skewed to polar residues.

The protein is Protein C (P/V/C) of Tupaia paramyxovirus (TPMV).